Here is a 124-residue protein sequence, read N- to C-terminus: Ribulose bisphosphate carboxylase small subunit (124 aa).

It belongs to the RuBisCO small chain family. Heterohexadecamer of 8 large and 8 small subunits.

RuBisCO catalyzes two reactions: the carboxylation of D-ribulose 1,5-bisphosphate, the primary event in carbon dioxide fixation, as well as the oxidative fragmentation of the pentose substrate. Both reactions occur simultaneously and in competition at the same active site. Although the small subunit is not catalytic it is essential for maximal activity. This is Ribulose bisphosphate carboxylase small subunit from Hydrogenophilus thermoluteolus (Pseudomonas hydrogenothermophila).